We begin with the raw amino-acid sequence, 196 residues long: Xanthine phosphoribosyltransferase (196 aa).

The xanthine site is built by Leu20 and Asn27. 128–132 (ATGAA) provides a ligand contact to 5-phospho-alpha-D-ribose 1-diphosphate. Xanthine is bound at residue Lys156.

This sequence belongs to the purine/pyrimidine phosphoribosyltransferase family. Xpt subfamily. As to quaternary structure, homodimer.

It localises to the cytoplasm. The catalysed reaction is XMP + diphosphate = xanthine + 5-phospho-alpha-D-ribose 1-diphosphate. It participates in purine metabolism; XMP biosynthesis via salvage pathway; XMP from xanthine: step 1/1. Converts the preformed base xanthine, a product of nucleic acid breakdown, to xanthosine 5'-monophosphate (XMP), so it can be reused for RNA or DNA synthesis. The chain is Xanthine phosphoribosyltransferase from Brevibacillus brevis (strain 47 / JCM 6285 / NBRC 100599).